The primary structure comprises 81 residues: ATP synthase subunit c, chloroplastic (81 aa).

Helical transmembrane passes span 3–23 (PIIS…ASIG) and 57–77 (LAFM…LLFA).

The protein belongs to the ATPase C chain family. In terms of assembly, F-type ATPases have 2 components, F(1) - the catalytic core - and F(0) - the membrane proton channel. F(1) has five subunits: alpha(3), beta(3), gamma(1), delta(1), epsilon(1). F(0) has four main subunits: a(1), b(1), b'(1) and c(10-14). The alpha and beta chains form an alternating ring which encloses part of the gamma chain. F(1) is attached to F(0) by a central stalk formed by the gamma and epsilon chains, while a peripheral stalk is formed by the delta, b and b' chains.

The protein resides in the plastid. It localises to the chloroplast thylakoid membrane. In terms of biological role, f(1)F(0) ATP synthase produces ATP from ADP in the presence of a proton or sodium gradient. F-type ATPases consist of two structural domains, F(1) containing the extramembraneous catalytic core and F(0) containing the membrane proton channel, linked together by a central stalk and a peripheral stalk. During catalysis, ATP synthesis in the catalytic domain of F(1) is coupled via a rotary mechanism of the central stalk subunits to proton translocation. Key component of the F(0) channel; it plays a direct role in translocation across the membrane. A homomeric c-ring of between 10-14 subunits forms the central stalk rotor element with the F(1) delta and epsilon subunits. The sequence is that of ATP synthase subunit c, chloroplastic from Phaseolus vulgaris (Kidney bean).